The sequence spans 265 residues: Indole-3-glycerol phosphate synthase (265 aa).

The protein belongs to the TrpC family.

The catalysed reaction is 1-(2-carboxyphenylamino)-1-deoxy-D-ribulose 5-phosphate + H(+) = (1S,2R)-1-C-(indol-3-yl)glycerol 3-phosphate + CO2 + H2O. The protein operates within amino-acid biosynthesis; L-tryptophan biosynthesis; L-tryptophan from chorismate: step 4/5. This is Indole-3-glycerol phosphate synthase from Xanthomonas campestris pv. campestris (strain 8004).